The primary structure comprises 61 residues: ORF6 protein (61 aa).

Positions 18-24 (IMRTFKV) are important for host Golgi localization.

It belongs to the coronaviruses accessory protein 6 family. Interacts (via C-terminus) with host RAE1 in the NUP98-RAE1 complex; this interaction disrupts the host nuclear import. Interacts with host KPNA2; this interaction may inhibit IFN-beta production by blocking IRF3 nuclear translocation.

The protein resides in the host endoplasmic reticulum membrane. It localises to the host Golgi apparatus membrane. Its function is as follows. Disrupts bidirectional nucleocytoplasmic transport by interacting with the host RAE1-NUP98 complex. Disrupts cell nuclear import complex formation by tethering karyopherin alpha 2 and karyopherin beta 1 to the membrane. Retention of import factors at the ER/Golgi membrane leads to a loss of transport into the nucleus. Prevents STAT1 nuclear translocation in response to interferon signaling, thus blocking the expression of interferon stimulated genes (ISGs) that display multiple antiviral activities. Suppresses IFN-beta production possibly by blocking IRF3 nuclear translocation. Might induce accumulation of host HNRNPA1. In terms of biological role, may play a role in viral double membrane vesicles networks to enhance viral replication. In Homo sapiens (Human), this protein is ORF6 protein.